The chain runs to 173 residues: NADH-ubiquinone oxidoreductase chain 6 (173 aa).

Transmembrane regions (helical) follow at residues 1–21 (MVYF…GVAS), 28–48 (AALG…SYGG), 53–73 (LILF…TAAL), 87–107 (VLMY…YFLV), and 139–159 (LGGW…FVVL).

It belongs to the complex I subunit 6 family.

It is found in the mitochondrion membrane. It carries out the reaction a ubiquinone + NADH + 5 H(+)(in) = a ubiquinol + NAD(+) + 4 H(+)(out). Its function is as follows. Core subunit of the mitochondrial membrane respiratory chain NADH dehydrogenase (Complex I) that is believed to belong to the minimal assembly required for catalysis. Complex I functions in the transfer of electrons from NADH to the respiratory chain. The immediate electron acceptor for the enzyme is believed to be ubiquinone. This is NADH-ubiquinone oxidoreductase chain 6 (MT-ND6) from Scyliorhinus canicula (Small-spotted catshark).